The primary structure comprises 194 residues: Xanthine phosphoribosyltransferase (194 aa).

Xanthine is bound by residues leucine 20 and asparagine 27. 128–132 provides a ligand contact to 5-phospho-alpha-D-ribose 1-diphosphate; that stretch reads ANGCA. Lysine 156 contributes to the xanthine binding site.

Belongs to the purine/pyrimidine phosphoribosyltransferase family. Xpt subfamily. As to quaternary structure, homodimer.

The protein resides in the cytoplasm. It catalyses the reaction XMP + diphosphate = xanthine + 5-phospho-alpha-D-ribose 1-diphosphate. The protein operates within purine metabolism; XMP biosynthesis via salvage pathway; XMP from xanthine: step 1/1. Functionally, converts the preformed base xanthine, a product of nucleic acid breakdown, to xanthosine 5'-monophosphate (XMP), so it can be reused for RNA or DNA synthesis. This is Xanthine phosphoribosyltransferase from Lachnoclostridium phytofermentans (strain ATCC 700394 / DSM 18823 / ISDg) (Clostridium phytofermentans).